Reading from the N-terminus, the 38-residue chain is Large ribosomal subunit protein bL36 (38 aa).

It belongs to the bacterial ribosomal protein bL36 family.

The protein is Large ribosomal subunit protein bL36 of Bacteroides fragilis (strain ATCC 25285 / DSM 2151 / CCUG 4856 / JCM 11019 / LMG 10263 / NCTC 9343 / Onslow / VPI 2553 / EN-2).